Reading from the N-terminus, the 291-residue chain is ATP synthase gamma chain (291 aa).

The protein belongs to the ATPase gamma chain family. F-type ATPases have 2 components, CF(1) - the catalytic core - and CF(0) - the membrane proton channel. CF(1) has five subunits: alpha(3), beta(3), gamma(1), delta(1), epsilon(1). CF(0) has three main subunits: a, b and c.

The protein localises to the cell inner membrane. Functionally, produces ATP from ADP in the presence of a proton gradient across the membrane. The gamma chain is believed to be important in regulating ATPase activity and the flow of protons through the CF(0) complex. The protein is ATP synthase gamma chain of Pelodictyon phaeoclathratiforme (strain DSM 5477 / BU-1).